Here is a 338-residue protein sequence, read N- to C-terminus: Protein UL141 (338 aa).

Residues 1-25 (MCRRESLRTLPWLFWVLLSCPRLLE) form the signal peptide. Topologically, residues 37 to 278 (DIAEKMWAEN…DTGMSPWATR (242 aa)) are extracellular. N-linked (GlcNAc...) asparagine; by host glycans are attached at residues Asn-117, Asn-132, and Asn-147. Residues 279 to 299 (GIAAFLGFWSIFTVCFLCYLC) traverse the membrane as a helical segment. At 300–338 (YLQCCGHWCPTPGRGRRGGEGYRRLPTYDSYPGVKKMKR) the chain is on the cytoplasmic side.

In terms of assembly, interacts with human PVR. Interacts with human TNFRSF10A and TNFRSF10B. Forms a homodimer that engages two TNFRSF10B monomers.

The protein resides in the host endoplasmic reticulum membrane. Evasion of NK cell killing. Blocks surface expression of PVR which is a ligand for NK cell-activating receptors. Binds human PVR in the endoplasmic reticulum and prevents its maturation and transport to the cell surface. Targets also the natural killer cell activating ligand NECTIN2 for proteasome-mediated degradation. Additionally promotes intracellular retention of TNFRSF10A/TRAIL-R1 and TNFRSF10B/TRAIL-R2 and thus down-regulates their cell surface expression. The chain is Protein UL141 (UL141) from Human cytomegalovirus (strain Merlin) (HHV-5).